A 284-amino-acid polypeptide reads, in one-letter code: 4-diphosphocytidyl-2-C-methyl-D-erythritol kinase (284 aa).

The active site involves Lys14. 98–108 (PMGGGLGGGSS) is a binding site for ATP. Asp140 is an active-site residue.

Belongs to the GHMP kinase family. IspE subfamily.

It catalyses the reaction 4-CDP-2-C-methyl-D-erythritol + ATP = 4-CDP-2-C-methyl-D-erythritol 2-phosphate + ADP + H(+). It functions in the pathway isoprenoid biosynthesis; isopentenyl diphosphate biosynthesis via DXP pathway; isopentenyl diphosphate from 1-deoxy-D-xylulose 5-phosphate: step 3/6. Catalyzes the phosphorylation of the position 2 hydroxy group of 4-diphosphocytidyl-2C-methyl-D-erythritol. The chain is 4-diphosphocytidyl-2-C-methyl-D-erythritol kinase from Shewanella piezotolerans (strain WP3 / JCM 13877).